The primary structure comprises 1521 residues: Protein OPAQUE1 (1521 aa).

The Myosin N-terminal SH3-like domain occupies 4–53 (RKGLKVWVEEKGEGWVEAEVVEAKERAVVVFSSQRKKITVSPEKLLPRDT). The region spanning 60–731 (GHVDDMTKLT…QIAILDMRRA (672 aa)) is the Myosin motor domain. ATP is bound by residues 155–162 (GESGAGKT) and 208–216 (NDNSSRFGK). 4 actin-binding regions span residues 493 to 527 (LIEKKPIGIIALLDEACMFPKSTHETFATKMFRNF), 529 to 552 (SHLRLERTKFSETDFTISHYAGKV), 587 to 612 (FTSLPEESIRSSYKFSSVASRFKLQL), and 612 to 634 (LQALMETLNSTEPHYVRCVKPNS). IQ domains are found at residues 733–755 (ILDNAARHIQGRFRTFITRKEFV), 756–778 (KTREASISIQAYCRGCLARKMFA), 781–803 (RETAAAVIVQKYVRRWLLRRAHL), 804–826 (QACLAALLIQSYIRGFIARRYFS), 829–851 (REHKAATVIQSTWRRRKFVILFQ), and 852–874 (NYRQATVAIQCSWRQKLARKELR). Coiled coils occupy residues 870 to 910 (RKEL…ERRL) and 974 to 1050 (SAEA…LRQK). Residues 1162–1459 (DHVIEAINDV…VAAMREMVNK (298 aa)) form the Dilute domain.

Belongs to the TRAFAC class myosin-kinesin ATPase superfamily. Myosin family. Plant myosin class XI subfamily. Interacts (via C-terminus) with HIP (via C-terminus), but not with zeins, FL1 or intrinsic proteins of protein bodies. In terms of tissue distribution, high expression in kernels and stems, intermediate in ears and leaves, and low in roots, silks and tassels.

It is found in the cytoplasm. Its function is as follows. Myosin XI motor protein required for endoplasmic reticulum motility and protein body formation. May function by binding with its tail domain to receptor proteins on membranes and exerting force with its N-terminal motor domain against actin filaments, thereby transporting its cargo along polarized actin cables. This is Protein OPAQUE1 from Zea mays (Maize).